Here is a 284-residue protein sequence, read N- to C-terminus: tRNA uridine(34) hydroxylase (284 aa).

The Rhodanese domain occupies 132–226 (AGRPVVMLDT…YFEEVGGAHY (95 aa)). Residue cysteine 186 is the Cysteine persulfide intermediate of the active site.

It belongs to the TrhO family.

The enzyme catalyses uridine(34) in tRNA + AH2 + O2 = 5-hydroxyuridine(34) in tRNA + A + H2O. In terms of biological role, catalyzes oxygen-dependent 5-hydroxyuridine (ho5U) modification at position 34 in tRNAs. The polypeptide is tRNA uridine(34) hydroxylase (Burkholderia ambifaria (strain MC40-6)).